Here is a 429-residue protein sequence, read N- to C-terminus: Adenylosuccinate synthetase (429 aa).

GTP contacts are provided by residues 12-18 and 40-42; these read GDEGKGK and GHT. Asp13 acts as the Proton acceptor in catalysis. The Mg(2+) site is built by Asp13 and Gly40. Residues 13-16, 38-41, Thr128, Arg142, Gln223, Thr238, and Arg302 each bind IMP; these read DEGK and NAGH. His41 acts as the Proton donor in catalysis. Residue 298–304 participates in substrate binding; that stretch reads VNTGRPR. GTP-binding positions include Arg304, 330–332, and 412–414; these read KLD and GVG.

Belongs to the adenylosuccinate synthetase family. In terms of assembly, homodimer. Mg(2+) is required as a cofactor.

It localises to the cytoplasm. The catalysed reaction is IMP + L-aspartate + GTP = N(6)-(1,2-dicarboxyethyl)-AMP + GDP + phosphate + 2 H(+). It functions in the pathway purine metabolism; AMP biosynthesis via de novo pathway; AMP from IMP: step 1/2. In terms of biological role, plays an important role in the de novo pathway of purine nucleotide biosynthesis. Catalyzes the first committed step in the biosynthesis of AMP from IMP. The protein is Adenylosuccinate synthetase of Corynebacterium urealyticum (strain ATCC 43042 / DSM 7109).